The chain runs to 334 residues: Probable allantoicase (334 aa).

This sequence belongs to the allantoicase family.

The catalysed reaction is allantoate + H2O = (S)-ureidoglycolate + urea. It functions in the pathway nitrogen metabolism; (S)-allantoin degradation; (S)-ureidoglycolate from allantoate (aminidohydrolase route): step 1/1. The polypeptide is Probable allantoicase (Acinetobacter baylyi (strain ATCC 33305 / BD413 / ADP1)).